Reading from the N-terminus, the 559-residue chain is Poly(3-hydroxyalkanoate) polymerase 1 (559 aa).

Cys-296 is a catalytic residue.

The protein belongs to the PHA/PHB synthase family. Type II PhaC subfamily.

Its pathway is biopolymer metabolism; poly-(R)-3-hydroxybutanoate biosynthesis. Functionally, synthesizes poly(3-hydroxyalkanoates) (PHA), complements a mutant of P.putida that does not make PHA. This chain is Poly(3-hydroxyalkanoate) polymerase 1, found in Ectopseudomonas oleovorans (Pseudomonas oleovorans).